We begin with the raw amino-acid sequence, 862 residues long: DNA gyrase subunit A (862 aa).

The region spanning 38–501 (LPDARDGLKP…DYDDIDVEDL (464 aa)) is the Topo IIA-type catalytic domain. The O-(5'-phospho-DNA)-tyrosine intermediate role is filled by Tyr126. The GyrA-box signature appears at 528–534 (QKRGGKG). Residues 843 to 862 (KEESDDDDIVADDTQEQDME) are disordered. A compositionally biased stretch (acidic residues) spans 845–862 (ESDDDDIVADDTQEQDME).

The protein belongs to the type II topoisomerase GyrA/ParC subunit family. As to quaternary structure, heterotetramer, composed of two GyrA and two GyrB chains. In the heterotetramer, GyrA contains the active site tyrosine that forms a transient covalent intermediate with DNA, while GyrB binds cofactors and catalyzes ATP hydrolysis.

Its subcellular location is the cytoplasm. The catalysed reaction is ATP-dependent breakage, passage and rejoining of double-stranded DNA.. In terms of biological role, a type II topoisomerase that negatively supercoils closed circular double-stranded (ds) DNA in an ATP-dependent manner to modulate DNA topology and maintain chromosomes in an underwound state. Negative supercoiling favors strand separation, and DNA replication, transcription, recombination and repair, all of which involve strand separation. Also able to catalyze the interconversion of other topological isomers of dsDNA rings, including catenanes and knotted rings. Type II topoisomerases break and join 2 DNA strands simultaneously in an ATP-dependent manner. This chain is DNA gyrase subunit A, found in Campylobacter fetus.